The primary structure comprises 261 residues: Cell division protein B (261 aa).

A winged-helix-like fold region spans residues 213–261; the sequence is SEDMILNYIKTTGGFIDVDYIAKNFDVSKDEVFNVLRRLEEKGLIVLEG.

As to quaternary structure, interacts with CdvA. Interacts with CdvC.

Its subcellular location is the cytoplasm. The protein localises to the nucleoid. Part of a cell division machinery. The CdvA, CdvB and CdvC proteins polymerize between segregating nucleoids and persist throughout cell division, forming a successively smaller structure during constriction. In Sulfolobus acidocaldarius (strain ATCC 33909 / DSM 639 / JCM 8929 / NBRC 15157 / NCIMB 11770), this protein is Cell division protein B.